Consider the following 220-residue polypeptide: Metalloproteinase inhibitor 2 (220 aa).

A signal peptide spans 1 to 26 (MGATARSLRLALGLLLLGTLPRGADA). Cys27 contributes to the Zn(2+) binding site. Involved in metalloproteinase-binding regions lie at residues 27–30 (CSCS) and 95–96 (SA). 6 cysteine pairs are disulfide-bonded: Cys27–Cys98, Cys29–Cys127, Cys39–Cys152, Cys154–Cys201, Cys159–Cys164, and Cys172–Cys193. Residues 27–152 (CSCSPVHPQQ…SLNHRYQMGC (126 aa)) enclose the NTR domain.

The protein belongs to the protease inhibitor I35 (TIMP) family. Interacts (via the C-terminal) with MMP2 (via the C-terminal PEX domain); the interaction inhibits the MMP2 activity. In terms of processing, the activity of TIMP2 is dependent on the presence of disulfide bonds. Predominantly expressed in the lung in alveolar macrophages and epithelial cells. Also found in brain, kidney, intestine, spleen and heart.

The protein localises to the secreted. Functionally, complexes with metalloproteinases (such as collagenases) and irreversibly inactivates them by binding to their catalytic zinc cofactor. The polypeptide is Metalloproteinase inhibitor 2 (TIMP2) (Cavia porcellus (Guinea pig)).